A 266-amino-acid chain; its full sequence is Vesicle-associated protein 4-1 (266 aa).

Residues 28–57 (STTSSSSTQNPNQNYRSRHGNRNTDISAVS) form a disordered region. Residues 76–199 (RLRLDPSSYL…VEQVLRVIFI (124 aa)) enclose the MSP domain. A coiled-coil region spans residues 200–228 (DADRPSAALEKLKRQLDEAEAAVEARKKP). Residues 219–229 (EAAVEARKKPP) are compositionally biased toward basic and acidic residues. Positions 219–239 (EAAVEARKKPPPETGPRVVGE) are disordered. S264 carries the post-translational modification Phosphoserine.

This sequence belongs to the VAMP-associated protein (VAP) (TC 9.B.17) family.

Its function is as follows. May play a role in vesicle trafficking. In Arabidopsis thaliana (Mouse-ear cress), this protein is Vesicle-associated protein 4-1 (PVA41).